We begin with the raw amino-acid sequence, 100 residues long: Elicitin Vex2 (100 aa).

Intrachain disulfides connect cysteine 3–cysteine 71, cysteine 27–cysteine 56, and cysteine 51–cysteine 95.

Belongs to the elicitin family.

It localises to the secreted. Functionally, induces local and distal defense responses (incompatible hypersensitive reaction) in plants from the solanaceae and cruciferae families. Elicits leaf necrosis and causes the accumulation of pathogenesis-related proteins. Might interact with the lipidic molecules of the plasma membrane. This Phytopythium vexans (Damping-off fungus) protein is Elicitin Vex2.